Here is a 137-residue protein sequence, read N- to C-terminus: Large ribosomal subunit protein uL16 (137 aa).

Belongs to the universal ribosomal protein uL16 family. Part of the 50S ribosomal subunit.

Its function is as follows. Binds 23S rRNA and is also seen to make contacts with the A and possibly P site tRNAs. This Psychrobacter arcticus (strain DSM 17307 / VKM B-2377 / 273-4) protein is Large ribosomal subunit protein uL16.